The following is a 162-amino-acid chain: Large ribosomal subunit protein uL10 (162 aa).

Belongs to the universal ribosomal protein uL10 family. Part of the ribosomal stalk of the 50S ribosomal subunit. The N-terminus interacts with L11 and the large rRNA to form the base of the stalk. The C-terminus forms an elongated spine to which L12 dimers bind in a sequential fashion forming a multimeric L10(L12)X complex.

Functionally, forms part of the ribosomal stalk, playing a central role in the interaction of the ribosome with GTP-bound translation factors. The sequence is that of Large ribosomal subunit protein uL10 from Borrelia duttonii (strain Ly).